An 872-amino-acid chain; its full sequence is MKELSSAQIRQMWLDFWKSKGHCVEPSANLVPVNDPTLLWINSGVATLKKYFDGSVIPENPRITNAQKSIRTNDIENVGKTARHHTMFEMLGNFSIGDYFRDEAIEWGFELLTSPEWFDFPKDKLYMTYYPDDKDSYNRWIACGVEPSHLVPIEDNFWEIGAGPSGPDTEIFFDRGEDFDPENIGLRLLAEDIENDRYIEIWNIVLSQFNADPAVPRSEYKELPNKNIDTGAGLERLAAVMQGAKTNFETDLFMPIIREVEKLSGKTYDPDGDNMSFKVIADHIRALSFAIGDGALPGNEGRGYVLRRLLRRAVMHGRRLGINETFLYKLVLTVGQIMESYYPEVLEKRDFIEKIVKREEETFARTIDAGSGHLDSLLAQLKAEGKDTLEGKDIFKLYDTYGFPVELTEELAEDAGYKIDHEGFKSAMKEQQDRARAAVVKGGSMGMQNETLAGIVEESRFEYDTYSLESSLSVIIADNERTEAVSEGQALLVFAQTPFYAEMGGQVADTGRIKNDKGDTVAEVVDVQKAPNGQPLHTVNVLASLSVGTNYTLEINKERRLAVEKNHTATHLLHAALHNVIGEHATQAGSLNEEEFLRFDFTHFEAVSNEELRHIEQEVNEQIWNALTITTTETDVETAKEMGAMALFGEKYGKVVRVVQIGNYSVELCGGTHLNNSSEIGLFKIVKEEGIGSGTRRIIAVTGRQAFEAYRNQEDALKEIAATVKAPQLKDAAAKVQALSDSLRDFQKENAELKEKAAAAAAGDVFKDVQEAKGVRFIASQVDVADAGALRTFADNWKQKDYSDVLVLVAAIGEKVNVLVASKTKDVHAGNMIKELAPIVAGRGGGKPDMAMAGGSDASKIAELLAAVAETV.

The Zn(2+) site is built by histidine 567, histidine 571, cysteine 669, and histidine 673.

Belongs to the class-II aminoacyl-tRNA synthetase family. It depends on Zn(2+) as a cofactor.

Its subcellular location is the cytoplasm. The catalysed reaction is tRNA(Ala) + L-alanine + ATP = L-alanyl-tRNA(Ala) + AMP + diphosphate. Catalyzes the attachment of alanine to tRNA(Ala) in a two-step reaction: alanine is first activated by ATP to form Ala-AMP and then transferred to the acceptor end of tRNA(Ala). Also edits incorrectly charged Ser-tRNA(Ala) and Gly-tRNA(Ala) via its editing domain. The polypeptide is Alanine--tRNA ligase (Streptococcus pyogenes serotype M2 (strain MGAS10270)).